Reading from the N-terminus, the 754-residue chain is 5-methyltetrahydropteroyltriglutamate--homocysteine methyltransferase (754 aa).

Residues 17-20 and Lys117 contribute to the 5-methyltetrahydropteroyltri-L-glutamate site; that span reads RELK. L-homocysteine is bound by residues 431 to 433 and Glu484; that span reads IGS. Residues 431-433 and Glu484 each bind L-methionine; that span reads IGS. Residues 515–516 and Trp561 contribute to the 5-methyltetrahydropteroyltri-L-glutamate site; that span reads RC. Residue Asp599 coordinates L-homocysteine. Asp599 is an L-methionine binding site. Residue Glu605 coordinates 5-methyltetrahydropteroyltri-L-glutamate. Zn(2+)-binding residues include His641, Cys643, and Glu665. The active-site Proton donor is the His694. Cys726 lines the Zn(2+) pocket.

This sequence belongs to the vitamin-B12 independent methionine synthase family. It depends on Zn(2+) as a cofactor.

It catalyses the reaction 5-methyltetrahydropteroyltri-L-glutamate + L-homocysteine = tetrahydropteroyltri-L-glutamate + L-methionine. The protein operates within amino-acid biosynthesis; L-methionine biosynthesis via de novo pathway; L-methionine from L-homocysteine (MetE route): step 1/1. Its function is as follows. Catalyzes the transfer of a methyl group from 5-methyltetrahydrofolate to homocysteine resulting in methionine formation. The chain is 5-methyltetrahydropteroyltriglutamate--homocysteine methyltransferase from Pectobacterium atrosepticum (strain SCRI 1043 / ATCC BAA-672) (Erwinia carotovora subsp. atroseptica).